An 86-amino-acid chain; its full sequence is Putative regulatory protein Desal_2819 (86 aa).

This sequence belongs to the RemA family.

In Maridesulfovibrio salexigens (strain ATCC 14822 / DSM 2638 / NCIMB 8403 / VKM B-1763) (Desulfovibrio salexigens), this protein is Putative regulatory protein Desal_2819.